We begin with the raw amino-acid sequence, 110 residues long: Thiosulfate sulfurtransferase GlpE (110 aa).

In terms of domain architecture, Rhodanese spans 17-105 (HQGKAVLVDI…WHRHFPAEVE (89 aa)). Catalysis depends on Cys-65, which acts as the Cysteine persulfide intermediate.

The protein belongs to the GlpE family.

Its subcellular location is the cytoplasm. The enzyme catalyses thiosulfate + hydrogen cyanide = thiocyanate + sulfite + 2 H(+). It carries out the reaction thiosulfate + [thioredoxin]-dithiol = [thioredoxin]-disulfide + hydrogen sulfide + sulfite + 2 H(+). Transferase that catalyzes the transfer of sulfur from thiosulfate to thiophilic acceptors such as cyanide or dithiols. May function in a CysM-independent thiosulfate assimilation pathway by catalyzing the conversion of thiosulfate to sulfite, which can then be used for L-cysteine biosynthesis. This is Thiosulfate sulfurtransferase GlpE from Enterobacter sp. (strain 638).